Reading from the N-terminus, the 29-residue chain is Lambda-theraphotoxin-Ec2a (29 aa).

Cystine bridges form between Cys-2-Cys-16, Cys-9-Cys-21, and Cys-15-Cys-25.

This sequence belongs to the neurotoxin 30 (phrixotoxin) family. Expressed by the venom gland.

It localises to the secreted. Its function is as follows. Insect-selective neurotoxin that potently blocks insect calcium-activated potassium (BKCa) channels (Slo-type) in cockroach dorsal unpaired median (DUM) neurons (IC(50)=3.7 nM). This occurs in the absence of any shifts in the voltage dependence of activation. At high concentrations (330 nM), it partially inhibits cockroach delayed-rectifier potassium channels (Kv) currents. May interact with the turret and/or loop region of the external entrance to the channel and does not project deeply into the pore of the channel. In vivo, does not show toxicity in mice after intracerebroventricular injection of up to 25 pmol/g (1.8 ug/20 g mouse). The protein is Lambda-theraphotoxin-Ec2a of Eucratoscelus constrictus (African red-rump baboon spider).